Here is a 205-residue protein sequence, read N- to C-terminus: uncharacterized protein (205 aa).

The protein belongs to the flavoredoxin family. The cofactor is FMN.

This is an uncharacterized protein from Bacillus subtilis (strain 168).